The chain runs to 483 residues: Zinc metalloproteinase/disintegrin (483 aa).

Residues 1–20 (MIQVLLVTLCLAAFPYQGSS) form the signal peptide. The propeptide occupies 21-190 (IILESGNVND…KKASQLNLTP (170 aa)). One can recognise a Peptidase M12B domain in the interval 198 to 394 (RYIELVVVAD…HNPQCMLNEP (197 aa)). The Ca(2+) site is built by E201 and D285. Cystine bridges form between C309–C389, C349–C373, and C351–C356. H334 contacts Zn(2+). E335 is a catalytic residue. The Zn(2+) site is built by H338 and H344. C389 and N392 together coordinate Ca(2+). Positions 395–418 (LRTDIVSTPVSGNELLETGEESDF) are excised as a propeptide. The region spanning 402 to 483 (TPVSGNELLE…AGCPRNPFHA (82 aa)) is the Disintegrin domain. Intrachain disulfides connect C425–C448, C439–C445, C444–C469, and C457–C476. A Cell attachment site motif is present at residues 461–463 (RGD).

This sequence belongs to the venom metalloproteinase (M12B) family. P-II subfamily. P-IId sub-subfamily. In terms of assembly, homodimer; disulfide-linked (disintegrin). The cofactor is Zn(2+). As to expression, expressed by the venom gland.

Its subcellular location is the secreted. Impairs hemostasis in the envenomed animal. This protein has not been identified in the venom. Its function is as follows. Inhibits ADP-induced platelet aggregation. Binds and inhibits integrins GPIIb/GPIIIa (ITGA2B/ITGB3), alpha-5/beta-1 (ITGA5/ITGB1), alpha-V/beta-3 (ITGAV/ITGB3), and alpha-V/beta-5 (ITGAV/ITGB5). It blocks cancer cell adhesion (tested on human breast cancer cell line MDA-MB-435) to fibronectin and vitronectin and thus prevents invasion of cancer cells. The protein is Zinc metalloproteinase/disintegrin of Agkistrodon contortrix contortrix (Southern copperhead).